Reading from the N-terminus, the 572-residue chain is Alpha-1D adrenergic receptor (572 aa).

Residues 1–77 form a disordered region; sequence MTFRDLLSVS…SAGEPGSAGA (77 aa). The Extracellular segment spans residues 1–95; it reads MTFRDLLSVS…AVGGLVVSAQ (95 aa). 2 stretches are compositionally biased toward gly residues: residues 23 to 33 and 42 to 61; these read SSAGGGGGSAG and AVGG…GAGS. Residues Asn65 and Asn82 are each glycosylated (N-linked (GlcNAc...) asparagine). Residues 96–121 form a helical membrane-spanning segment; that stretch reads GVGVGVFLAAFILMAVAGNLLVILSV. Over 122–133 the chain is Cytoplasmic; sequence ACNRHLQTVTNY. The chain crosses the membrane as a helical span at residues 134-159; the sequence is FIVNLAVADLLLSATVLPFSATMEVL. Residues 160 to 169 lie on the Extracellular side of the membrane; the sequence is GFWAFGRAFC. Residues 170 to 192 form a helical membrane-spanning segment; that stretch reads DVWAAVDVLCCTASILSLCTISV. The Cytoplasmic segment spans residues 193 to 213; that stretch reads DRYVGVRHSLKYPAIMTERKA. Residues 214 to 238 form a helical membrane-spanning segment; it reads AAILALLWVVALVVSVGPLLGWKEP. Topologically, residues 239 to 251 are extracellular; that stretch reads VPPDERFCGITEE. Residues 252–275 traverse the membrane as a helical segment; it reads AGYAVFSSVCSFYLPMAVIVVMYC. Residues 276–348 are Cytoplasmic-facing; it reads RVYVVARSTT…KFSREKKAAK (73 aa). The chain crosses the membrane as a helical span at residues 349–373; it reads TLAIVVGVFVLCWFPFFFVLPLGSL. Residues 374-380 lie on the Extracellular side of the membrane; sequence FPQLKPS. The chain crosses the membrane as a helical span at residues 381–405; it reads EGVFKVIFWLGYFNSCVNPLIYPCS. Residues 406–572 lie on the Cytoplasmic side of the membrane; it reads SREFKRAFLR…DYSNLRETDI (167 aa). Cys419 is lipidated: S-palmitoyl cysteine. Residues 444 to 488 form a disordered region; it reads GLRQDCAPSSGDAPPGAPLALTALPDPDPEPPGTPEMQAPVASRR. Low complexity predominate over residues 450–468; sequence APSSGDAPPGAPLALTALP.

It belongs to the G-protein coupled receptor 1 family. Adrenergic receptor subfamily. ADRA1D sub-subfamily. Interacts with FLNA (via filamin repeat 21); increases PKA-mediated phosphorylation of FLNA. Palmitoylated. Palmitoylation by ZDHHC21 may increase the expression of the receptor and regulate downstream signaling.

Its subcellular location is the cell membrane. Functionally, this alpha-adrenergic receptor mediates its effect through the influx of extracellular calcium. The sequence is that of Alpha-1D adrenergic receptor (ADRA1D) from Homo sapiens (Human).